We begin with the raw amino-acid sequence, 137 residues long: Large-conductance mechanosensitive channel (137 aa).

Transmembrane regions (helical) follow at residues 9–29 (AFAV…GAAF), 32–52 (IVSS…IGGV), 54–74 (FGDL…VVLA), and 79–99 (IQSI…VKVI).

The protein belongs to the MscL family. Homopentamer.

The protein resides in the cell inner membrane. Its function is as follows. Channel that opens in response to stretch forces in the membrane lipid bilayer. May participate in the regulation of osmotic pressure changes within the cell. This is Large-conductance mechanosensitive channel from Pseudomonas fluorescens (strain ATCC BAA-477 / NRRL B-23932 / Pf-5).